The following is a 124-amino-acid chain: Large ribosomal subunit protein bL12 (124 aa).

It belongs to the bacterial ribosomal protein bL12 family. Homodimer. Part of the ribosomal stalk of the 50S ribosomal subunit. Forms a multimeric L10(L12)X complex, where L10 forms an elongated spine to which 2 to 4 L12 dimers bind in a sequential fashion. Binds GTP-bound translation factors.

Functionally, forms part of the ribosomal stalk which helps the ribosome interact with GTP-bound translation factors. Is thus essential for accurate translation. The protein is Large ribosomal subunit protein bL12 of Jannaschia sp. (strain CCS1).